A 466-amino-acid chain; its full sequence is 3-isopropylmalate dehydratase large subunit (466 aa).

Positions 347, 407, and 410 each coordinate [4Fe-4S] cluster.

Belongs to the aconitase/IPM isomerase family. LeuC type 1 subfamily. In terms of assembly, heterodimer of LeuC and LeuD. [4Fe-4S] cluster serves as cofactor.

It carries out the reaction (2R,3S)-3-isopropylmalate = (2S)-2-isopropylmalate. It functions in the pathway amino-acid biosynthesis; L-leucine biosynthesis; L-leucine from 3-methyl-2-oxobutanoate: step 2/4. Functionally, catalyzes the isomerization between 2-isopropylmalate and 3-isopropylmalate, via the formation of 2-isopropylmaleate. The protein is 3-isopropylmalate dehydratase large subunit of Enterobacter sp. (strain 638).